The sequence spans 647 residues: DNA mismatch repair protein MutL (647 aa).

A disordered region spans residues 377-396; the sequence is EEPQAVKQSAQLWQPPKQEW. Low complexity predominate over residues 387 to 396; it reads QLWQPPKQEW.

The protein belongs to the DNA mismatch repair MutL/HexB family.

Its function is as follows. This protein is involved in the repair of mismatches in DNA. It is required for dam-dependent methyl-directed DNA mismatch repair. May act as a 'molecular matchmaker', a protein that promotes the formation of a stable complex between two or more DNA-binding proteins in an ATP-dependent manner without itself being part of a final effector complex. The polypeptide is DNA mismatch repair protein MutL (Bacillus cereus (strain AH187)).